The primary structure comprises 113 residues: Putative hemolysin E-like protein (113 aa).

It belongs to the hemolysin E family.

The polypeptide is Putative hemolysin E-like protein (Shigella flexneri).